A 295-amino-acid chain; its full sequence is Elongation factor Ts (295 aa).

An involved in Mg(2+) ion dislocation from EF-Tu region spans residues Thr-79–Val-82.

This sequence belongs to the EF-Ts family.

It is found in the cytoplasm. Its function is as follows. Associates with the EF-Tu.GDP complex and induces the exchange of GDP to GTP. It remains bound to the aminoacyl-tRNA.EF-Tu.GTP complex up to the GTP hydrolysis stage on the ribosome. This is Elongation factor Ts from Bacillus cereus (strain ATCC 10987 / NRS 248).